The chain runs to 825 residues: Zinc finger protein 28 (825 aa).

The segment at 26-65 (RPGGGPAAGTVVAPGSPDRGRPRSRNSLASQDQQGAVTSG) is disordered. Residues 33–42 (AGTVVAPGSP) are compositionally biased toward low complexity. The segment covering 51-65 (NSLASQDQQGAVTSG) has biased composition (polar residues). Residues 103 to 174 (VTFGDVAVVF…KRKMRKGQHL (72 aa)) enclose the KRAB domain. C2H2-type zinc fingers lie at residues 377-399 (FQCNECKKTFTQSSSLTVHQRIH), 405-427 (YKCNQCGKAFSDGSSFARHQRCH), 433-456 (YECPECGKAFIQNTSLVRHWRYYH), 462-484 (FDCIDCGKAFSDHIGLNQHRRIH), 490-512 (YTCEVCHKSFRYGSSLTVHQRIH), 518-540 (YECEICRKAFSHHASLTQHQRVH), 546-568 (FKCKECGKAFRQNIHLASHWRIH), 574-596 (FECGECGKSFSISSQLATHQRIH), 602-624 (YECKVCRKAFTQKAHLAQHQKTH), 630-652 (YECKECGKAFSQTTHLIQHQRVH), 658-680 (YKCLECGKAFGDNSSCTQHRRLH), 686-708 (YECVECGKTFKTKSSLICHRRCH), 714-736 (YECSACGKAFSHRQSLSVHQRIH), and 742-764 (YECKECRKTFIQIGHLNQHKRVH). The segment at 770 to 792 (YNYKKGRRAFRQTAHFAHHQQIH) adopts a C2H2-type 15; degenerate zinc-finger fold.

Belongs to the krueppel C2H2-type zinc-finger protein family. In terms of tissue distribution, expressed predominantly in ovary.

The protein resides in the nucleus. May be involved in transcriptional regulation. May have a role in embryonic development. This Mus musculus (Mouse) protein is Zinc finger protein 28 (Zfp28).